The chain runs to 545 residues: Chaperonin GroEL (545 aa).

ATP contacts are provided by residues 30-33 (TLGP), lysine 51, 87-91 (DGTTT), glycine 415, and aspartate 495.

Belongs to the chaperonin (HSP60) family. Forms a cylinder of 14 subunits composed of two heptameric rings stacked back-to-back. Interacts with the co-chaperonin GroES.

The protein resides in the cytoplasm. It carries out the reaction ATP + H2O + a folded polypeptide = ADP + phosphate + an unfolded polypeptide.. Together with its co-chaperonin GroES, plays an essential role in assisting protein folding. The GroEL-GroES system forms a nano-cage that allows encapsulation of the non-native substrate proteins and provides a physical environment optimized to promote and accelerate protein folding. The polypeptide is Chaperonin GroEL (Shewanella sp. (strain MR-7)).